Here is a 183-residue protein sequence, read N- to C-terminus: Ribosome maturation factor RimM (183 aa).

In terms of domain architecture, PRC barrel spans 105 to 181 (ANEYHLMDLI…RIEIDPPLGL (77 aa)).

Belongs to the RimM family. Binds ribosomal protein uS19.

It is found in the cytoplasm. An accessory protein needed during the final step in the assembly of 30S ribosomal subunit, possibly for assembly of the head region. Essential for efficient processing of 16S rRNA. May be needed both before and after RbfA during the maturation of 16S rRNA. It has affinity for free ribosomal 30S subunits but not for 70S ribosomes. The sequence is that of Ribosome maturation factor RimM from Thermosynechococcus vestitus (strain NIES-2133 / IAM M-273 / BP-1).